The primary structure comprises 368 residues: RNA polymerase sigma factor SigA (368 aa).

Over residues 71 to 83 (NEKDSSDTDDKIN) the composition is skewed to basic and acidic residues. Residues 71–90 (NEKDSSDTDDKINPNDLSAP) form a disordered region. Residues 135 to 205 (LAEANLRLVV…TRAIADQART (71 aa)) form a sigma-70 factor domain-2 region. Positions 159–162 (DLIQ) match the Interaction with polymerase core subunit RpoC motif. Positions 214–290 (ETINKLIRVQ…DQEAQSPSDH (77 aa)) are sigma-70 factor domain-3. The sigma-70 factor domain-4 stretch occupies residues 303 to 356 (VLDTLTDREENVLRLRFGLDDGRTRTLEEVGKVFGVTRERIRQIEAKALRKLRH). A DNA-binding region (H-T-H motif) is located at residues 329–348 (LEEVGKVFGVTRERIRQIEA).

The protein belongs to the sigma-70 factor family. RpoD/SigA subfamily. In terms of assembly, interacts transiently with the RNA polymerase catalytic core.

The protein localises to the cytoplasm. Its function is as follows. Sigma factors are initiation factors that promote the attachment of RNA polymerase to specific initiation sites and are then released. This sigma factor is the primary sigma factor during exponential growth. This Staphylococcus epidermidis (strain ATCC 35984 / DSM 28319 / BCRC 17069 / CCUG 31568 / BM 3577 / RP62A) protein is RNA polymerase sigma factor SigA.